The sequence spans 430 residues: GTPase Obg (430 aa).

An Obg domain is found at 1 to 158 (MFVDQVKISL…LDVSLELKLL (158 aa)). The tract at residues 118 to 145 (KGGRGGRGNSRFATPRNPAPDFSEKGEP) is disordered. Residues 159–329 (ADVGLVGFPS…LLYAIADKLE (171 aa)) enclose the OBG-type G domain. Residues 165 to 172 (GFPSVGKS), 190 to 194 (FTTIK), 212 to 215 (DLPG), 282 to 285 (NKMD), and 310 to 312 (STI) each bind GTP. Residues S172 and T192 each coordinate Mg(2+). Residues 352-430 (KHTPSQDKFT…ILGGEFEFVE (79 aa)) form the OCT domain.

It belongs to the TRAFAC class OBG-HflX-like GTPase superfamily. OBG GTPase family. As to quaternary structure, monomer. Mg(2+) is required as a cofactor.

It is found in the cytoplasm. Functionally, an essential GTPase which binds GTP, GDP and possibly (p)ppGpp with moderate affinity, with high nucleotide exchange rates and a fairly low GTP hydrolysis rate. Plays a role in control of the cell cycle, stress response, ribosome biogenesis and in those bacteria that undergo differentiation, in morphogenesis control. In Staphylococcus aureus (strain COL), this protein is GTPase Obg.